Here is a 145-residue protein sequence, read N- to C-terminus: UPF0763 protein CFF8240_1572 (145 aa).

Belongs to the UPF0763 family.

This chain is UPF0763 protein CFF8240_1572, found in Campylobacter fetus subsp. fetus (strain 82-40).